Consider the following 373-residue polypeptide: ORC1-type DNA replication protein 2 (373 aa).

ATP-binding positions include 63–67 (TGKTS), Y205, and R217.

It belongs to the CDC6/cdc18 family.

Involved in regulation of DNA replication. In Methanosarcina mazei (strain ATCC BAA-159 / DSM 3647 / Goe1 / Go1 / JCM 11833 / OCM 88) (Methanosarcina frisia), this protein is ORC1-type DNA replication protein 2 (cdc6-2).